Consider the following 457-residue polypeptide: tRNA-2-methylthio-N(6)-dimethylallyladenosine synthase (457 aa).

The 118-residue stretch at 3 to 120 folds into the MTTase N-terminal domain; sequence KKVYVKTFGC…LPQMIDARRE (118 aa). Residues C12, C49, C83, C157, C161, and C164 each coordinate [4Fe-4S] cluster. The Radical SAM core domain maps to 143-377; that stretch reads RVEGPSAFVS…QATIEENVAR (235 aa). A TRAM domain is found at 380 to 447; the sequence is QSMLGKVERI…PHSLRGELVL (68 aa).

The protein belongs to the methylthiotransferase family. MiaB subfamily. Monomer. The cofactor is [4Fe-4S] cluster.

It localises to the cytoplasm. The catalysed reaction is N(6)-dimethylallyladenosine(37) in tRNA + (sulfur carrier)-SH + AH2 + 2 S-adenosyl-L-methionine = 2-methylsulfanyl-N(6)-dimethylallyladenosine(37) in tRNA + (sulfur carrier)-H + 5'-deoxyadenosine + L-methionine + A + S-adenosyl-L-homocysteine + 2 H(+). Functionally, catalyzes the methylthiolation of N6-(dimethylallyl)adenosine (i(6)A), leading to the formation of 2-methylthio-N6-(dimethylallyl)adenosine (ms(2)i(6)A) at position 37 in tRNAs that read codons beginning with uridine. This Burkholderia pseudomallei (strain 1710b) protein is tRNA-2-methylthio-N(6)-dimethylallyladenosine synthase.